The following is a 374-amino-acid chain: Chaperone protein DnaJ (374 aa).

Positions 5–70 (DYYEVLGLEK…DKKANYDRFG (66 aa)) constitute a J domain. Residues 137-219 (GVEKSINITR…CHGAGHVRKK (83 aa)) form a CR-type zinc finger. 8 residues coordinate Zn(2+): C150, C153, C167, C170, C193, C196, C207, and C210. CXXCXGXG motif repeat units lie at residues 150–157 (CETCGGTG), 167–174 (CDKCGGTG), 193–200 (CDKCGGRG), and 207–214 (CHECHGAG).

This sequence belongs to the DnaJ family. As to quaternary structure, homodimer. It depends on Zn(2+) as a cofactor.

It localises to the cytoplasm. In terms of biological role, participates actively in the response to hyperosmotic and heat shock by preventing the aggregation of stress-denatured proteins and by disaggregating proteins, also in an autonomous, DnaK-independent fashion. Unfolded proteins bind initially to DnaJ; upon interaction with the DnaJ-bound protein, DnaK hydrolyzes its bound ATP, resulting in the formation of a stable complex. GrpE releases ADP from DnaK; ATP binding to DnaK triggers the release of the substrate protein, thus completing the reaction cycle. Several rounds of ATP-dependent interactions between DnaJ, DnaK and GrpE are required for fully efficient folding. Also involved, together with DnaK and GrpE, in the DNA replication of plasmids through activation of initiation proteins. This chain is Chaperone protein DnaJ, found in Clostridium acetobutylicum (strain ATCC 824 / DSM 792 / JCM 1419 / IAM 19013 / LMG 5710 / NBRC 13948 / NRRL B-527 / VKM B-1787 / 2291 / W).